The sequence spans 67 residues: Large ribosomal subunit protein bL35 (67 aa).

The protein belongs to the bacterial ribosomal protein bL35 family.

The protein is Large ribosomal subunit protein bL35 of Methylorubrum extorquens (strain CM4 / NCIMB 13688) (Methylobacterium extorquens).